We begin with the raw amino-acid sequence, 254 residues long: Nickel import ATP-binding protein NikD (254 aa).

The 240-residue stretch at 2 to 241 folds into the ABC transporter domain; sequence PQQIELRNIA…PKHAVTRSLV (240 aa). ATP is bound at residue 36-43; the sequence is GGSGSGKS.

It belongs to the ABC transporter superfamily. Nickel importer (TC 3.A.1.5.3) family. The complex is composed of two ATP-binding proteins (NikD and NikE), two transmembrane proteins (NikB and NikC) and a solute-binding protein (NikA).

Its subcellular location is the cell inner membrane. It catalyses the reaction Ni(2+)(out) + ATP + H2O = Ni(2+)(in) + ADP + phosphate + H(+). Functionally, part of the ABC transporter complex NikABCDE involved in nickel import. Responsible for energy coupling to the transport system. The polypeptide is Nickel import ATP-binding protein NikD (Escherichia coli (strain UTI89 / UPEC)).